Consider the following 448-residue polypeptide: Trigger factor (448 aa).

Residues 162 to 243 (GDFVQIDLNA…VRTVKEKELP (82 aa)) enclose the PPIase FKBP-type domain.

The protein belongs to the FKBP-type PPIase family. Tig subfamily.

The protein resides in the cytoplasm. It carries out the reaction [protein]-peptidylproline (omega=180) = [protein]-peptidylproline (omega=0). Functionally, involved in protein export. Acts as a chaperone by maintaining the newly synthesized protein in an open conformation. Functions as a peptidyl-prolyl cis-trans isomerase. The protein is Trigger factor of Salinispora arenicola (strain CNS-205).